The following is a 180-amino-acid chain: Sec-independent protein translocase protein TatB (180 aa).

A helical membrane pass occupies residues 1–21; it reads MFDIGWSELLVIGVVALIAIG. A disordered region spans residues 95-180; that stretch reads IEGVDKPVES…AERLKDAKAS (86 aa). The segment covering 103-123 has biased composition (low complexity); that stretch reads ESQPAASAAPETSATVEAPAT. Residues 170-180 are compositionally biased toward basic and acidic residues; sequence EAERLKDAKAS.

This sequence belongs to the TatB family. The Tat system comprises two distinct complexes: a TatABC complex, containing multiple copies of TatA, TatB and TatC subunits, and a separate TatA complex, containing only TatA subunits. Substrates initially bind to the TatABC complex, which probably triggers association of the separate TatA complex to form the active translocon.

The protein resides in the cell inner membrane. Its function is as follows. Part of the twin-arginine translocation (Tat) system that transports large folded proteins containing a characteristic twin-arginine motif in their signal peptide across membranes. Together with TatC, TatB is part of a receptor directly interacting with Tat signal peptides. TatB may form an oligomeric binding site that transiently accommodates folded Tat precursor proteins before their translocation. The chain is Sec-independent protein translocase protein TatB from Bradyrhizobium sp. (strain BTAi1 / ATCC BAA-1182).